Here is a 93-residue protein sequence, read N- to C-terminus: MKLFLVLIILLFEVLTDGARLKKCFNNVTGYCRKKCKVGEIHEIGCLSGKLCCVNDEENKKHVPFKKPHQQPVEKLSVQQDYVILPTITIFTV.

Residues M1–G18 form the signal peptide. Cystine bridges form between C24–C52, C32–C46, and C36–C53.

The protein belongs to the beta-defensin family.

Its subcellular location is the secreted. Functionally, has antibacterial activity. This chain is Beta-defensin 128 (DEFB128), found in Macaca fascicularis (Crab-eating macaque).